A 216-amino-acid chain; its full sequence is MLLDYIKSRRGAIGIGTLIIFIALVLVAAVAAAVIINTAANLQHKAARVGEESTRQVASGIQVLKITGYAVNTKNITKLAILVSPNVGDEIDLSSTIVTISNGDYKASLVYGGQITYVNTNGTRDIFNESWPNIANPTTEFGVIVLQDADGSMNNTEHPTMNFGDKAIIAINVGDVFGGIMPRERIYGEVIPEFGASGIIEFRAPSTFSEHVVTLQ.

The propeptide occupies methionine 1–glycine 11.

The protein belongs to the archaeal flagellin family.

The protein resides in the archaeal flagellum. Flagellin is the subunit protein which polymerizes to form the filaments of archaeal flagella. This chain is Flagellin B3 (flaB3), found in Methanocaldococcus jannaschii (strain ATCC 43067 / DSM 2661 / JAL-1 / JCM 10045 / NBRC 100440) (Methanococcus jannaschii).